A 137-amino-acid polypeptide reads, in one-letter code: Protein PsiE homolog (137 aa).

4 helical membrane-spanning segments follow: residues 13 to 35 (ILLR…AFLI), 55 to 77 (YYMT…IVKY), 84 to 103 (FPLR…FIIV), and 107 to 129 (SATS…FLAN).

Belongs to the PsiE family.

It localises to the cell membrane. This Listeria monocytogenes serotype 4b (strain F2365) protein is Protein PsiE homolog.